Reading from the N-terminus, the 502-residue chain is ATP synthase subunit alpha (502 aa).

A disordered region spans residues 115 to 135 (VDGLGPINTTNTRPIESPAPG). Position 169–176 (169–176 (GDRQTGKT)) interacts with ATP.

Belongs to the ATPase alpha/beta chains family. F-type ATPases have 2 components, CF(1) - the catalytic core - and CF(0) - the membrane proton channel. CF(1) has five subunits: alpha(3), beta(3), gamma(1), delta(1), epsilon(1). CF(0) has three main subunits: a(1), b(2) and c(9-12). The alpha and beta chains form an alternating ring which encloses part of the gamma chain. CF(1) is attached to CF(0) by a central stalk formed by the gamma and epsilon chains, while a peripheral stalk is formed by the delta and b chains.

It is found in the cell membrane. It carries out the reaction ATP + H2O + 4 H(+)(in) = ADP + phosphate + 5 H(+)(out). In terms of biological role, produces ATP from ADP in the presence of a proton gradient across the membrane. The alpha chain is a regulatory subunit. This Bacillus cereus (strain B4264) protein is ATP synthase subunit alpha.